A 307-amino-acid polypeptide reads, in one-letter code: Ribosomal RNA large subunit methyltransferase F (307 aa).

Belongs to the methyltransferase superfamily. METTL16/RlmF family.

The protein resides in the cytoplasm. The catalysed reaction is adenosine(1618) in 23S rRNA + S-adenosyl-L-methionine = N(6)-methyladenosine(1618) in 23S rRNA + S-adenosyl-L-homocysteine + H(+). In terms of biological role, specifically methylates the adenine in position 1618 of 23S rRNA. In Bacteroides thetaiotaomicron (strain ATCC 29148 / DSM 2079 / JCM 5827 / CCUG 10774 / NCTC 10582 / VPI-5482 / E50), this protein is Ribosomal RNA large subunit methyltransferase F.